Consider the following 65-residue polypeptide: Hirudin-2' (65 aa).

An interaction with thrombin active site region spans residues 1–3 (ITY). 3 disulfide bridges follow: Cys-6–Cys-14, Cys-16–Cys-28, and Cys-22–Cys-39. The disordered stretch occupies residues 39–65 (CVTGEGTPKPQSHNDGDFEEIPEEYLQ). The O-linked (GalNAc...) threonine glycan is linked to Thr-45. An interaction with fibrinogen-binding exosite of thrombin region spans residues 55–65 (DFEEIPEEYLQ). Positions 55 to 65 (DFEEIPEEYLQ) are enriched in acidic residues. Tyr-63 bears the Sulfotyrosine mark.

It belongs to the protease inhibitor I14 (hirudin) family.

Its subcellular location is the secreted. Functionally, hirudin is a potent thrombin-specific protease inhibitor. It forms a stable non-covalent complex with alpha-thrombin, thereby abolishing its ability to cleave fibrinogen. The chain is Hirudin-2' from Hirudo medicinalis (Medicinal leech).